A 229-amino-acid chain; its full sequence is Urease accessory protein UreF (229 aa).

Belongs to the UreF family. UreD, UreF and UreG form a complex that acts as a GTP-hydrolysis-dependent molecular chaperone, activating the urease apoprotein by helping to assemble the nickel containing metallocenter of UreC. The UreE protein probably delivers the nickel.

The protein localises to the cytoplasm. In terms of biological role, required for maturation of urease via the functional incorporation of the urease nickel metallocenter. This is Urease accessory protein UreF from Staphylococcus aureus (strain MRSA252).